Here is a 51-residue protein sequence, read N- to C-terminus: MTLFESLRSISSFSNEKNQKLNSKTNISSTTFSINSFENNNICFNGGVCPR.

This is an uncharacterized protein from Dictyostelium discoideum (Social amoeba).